The primary structure comprises 562 residues: NAD-dependent histone deacetylase SIR2 (562 aa).

The segment at methionine 1–glycine 67 is disordered. Residues serine 11 to threonine 25 are compositionally biased toward polar residues. Basic and acidic residues predominate over residues glutamine 26–aspartate 36. Positions arginine 237–threonine 527 constitute a Deacetylase sirtuin-type domain. NAD(+) is bound by residues glycine 262–tyrosine 281 and glutamine 344–aspartate 347. Histidine 364 functions as the Proton acceptor in the catalytic mechanism. 4 residues coordinate Zn(2+): cysteine 372, cysteine 375, cysteine 396, and cysteine 399. NAD(+)-binding positions include glycine 471–serine 473, asparagine 496–aspartate 498, and cysteine 513.

This sequence belongs to the sirtuin family. Class I subfamily. Homomultimer. Forms a complex with SIR3 and SIR4. Component of the RENT complex, at least composed of SIR2, CDC14 and NET1. The RENT complex interacts with FOB1. Interacts with ESC8. Interacts with and ZDS2. Interacts with MCM10. Interacts with SLX5. Interacts with NSI1. Zn(2+) is required as a cofactor.

It localises to the nucleus. Its subcellular location is the nucleolus. The enzyme catalyses N(6)-acetyl-L-lysyl-[protein] + NAD(+) + H2O = 2''-O-acetyl-ADP-D-ribose + nicotinamide + L-lysyl-[protein]. Its activity is increased by calorie restriction, which slows the pace of aging and increases maximum lifespan. Activated by resveratrol (3,5,4'-trihydroxy-trans-stilbene), which is found in red wine. Functionally, NAD-dependent deacetylase, which participates in a wide range of cellular events including chromosome silencing, chromosome segregation, DNA recombination and the determination of life span. Involved in transcriptional repression of the silent mating-type loci HML and HMR and telomeric silencing via its association with SIR3 and SIR4. Plays a central role in ribosomal DNA (rDNA) silencing via its association with the RENT complex, preventing hyperrecombination, and repressing transcription from foreign promoters, which contributes to extending life span. Probably represses transcription via the formation of heterochromatin structure, which involves the compaction of chromatin fiber into a more condensed form, although this complex in at least one case can still bind euchromatic levels of positive transcription regulators. Although it displays some NAD-dependent histone deacetylase activity on histone H3K9Ac and H3K14Ac and histone H4K16Ac in vitro, such activity is unclear in vivo and may not be essential. This Saccharomyces cerevisiae (strain ATCC 204508 / S288c) (Baker's yeast) protein is NAD-dependent histone deacetylase SIR2 (SIR2).